Here is a 378-residue protein sequence, read N- to C-terminus: Merozoite surface protein P41 (378 aa).

The first 20 residues, 1–20 (MKGVIFCLVVLLWRQAWVSS), serve as a signal peptide directing secretion. A 6-Cys 1 domain is found at 21–133 (KSHKCDFTKE…LKINRFLKDD (113 aa)). 3 cysteine pairs are disulfide-bonded: cysteine 25–cysteine 42, cysteine 56–cysteine 113, and cysteine 64–cysteine 111. N-linked (GlcNAc...) asparagine glycosylation is found at asparagine 77, asparagine 149, asparagine 182, and asparagine 205. A 6-Cys 2 domain is found at 241-375 (VIKGCDFGNN…GESEVVLNSF (135 aa)). 3 disulfide bridges follow: cysteine 245–cysteine 270, cysteine 284–cysteine 348, and cysteine 297–cysteine 346. Asparagine 351 is a glycosylation site (N-linked (GlcNAc...) asparagine).

Heterodimer; heterodimerizes with PF12. May form an antiparallel heterodimer with PF12. Post-translationally, processed into a soluble form.

It localises to the cell surface. It is found in the cell membrane. The polypeptide is Merozoite surface protein P41 (PF41) (Plasmodium falciparum (isolate 3D7)).